We begin with the raw amino-acid sequence, 155 residues long: Cyanate hydratase (155 aa).

Catalysis depends on residues Arg95, Glu98, and Ser121.

Belongs to the cyanase family.

The catalysed reaction is cyanate + hydrogencarbonate + 3 H(+) = NH4(+) + 2 CO2. Catalyzes the reaction of cyanate with bicarbonate to produce ammonia and carbon dioxide. The protein is Cyanate hydratase of Pseudomonas syringae pv. tomato (strain ATCC BAA-871 / DC3000).